Consider the following 541-residue polypeptide: Molybdate transporter 1 (541 aa).

Helical transmembrane passes span 24-44, 58-78, 98-118, 137-157, and 168-188; these read LLLS…PLLL, LLFS…PLPV, TVAA…TGGL, AGMS…GWLW, and GLGE…GLVV. The segment at 193 to 213 is disordered; that stretch reads QQQQQQQSGEKPQERRKKRSK. The next 2 membrane-spanning stretches (helical) occupy residues 214-234 and 287-307; these read MPVQ…FAVV and MAIA…SALA. The interval 317 to 366 is disordered; that stretch reads PQLYADDESSDSPLSPSPSASSSSLSSAPPQTPSAETPKPLSSPTSAEEG. Positions 327–351 are enriched in low complexity; it reads DSPLSPSPSASSSSLSSAPPQTPSA. Transmembrane regions (helical) follow at residues 413–433 and 435–455; these read IILL…PGLL and LLGK…GVEL. The tract at residues 510–541 is disordered; that stretch reads TEKGRGGEQGLLGEEEEEEEQGRVDEESPLLR.

Belongs to the SLC26A/SulP transporter (TC 2.A.53) family.

The protein resides in the vacuole membrane. Functionally, exports stored molybdate from the vacuole into the cytosol, making it available for molybdate cofactor (Moco) biosynthesis. Plays a role in molybdate homeostasis as high cytosolic levels of molybdate are toxic to cells. Not required for molybdate import into cells. The sequence is that of Molybdate transporter 1 from Neurospora crassa (strain ATCC 24698 / 74-OR23-1A / CBS 708.71 / DSM 1257 / FGSC 987).